A 673-amino-acid chain; its full sequence is Xaa-Pro aminopeptidase 2 (673 aa).

The signal sequence occupies residues 1–21; sequence MAQACWGCYPWLVLICACAWG. N-linked (GlcNAc...) asparagine glycosylation is found at asparagine 34, asparagine 48, and asparagine 64. Residue arginine 115 participates in substrate binding. 3 N-linked (GlcNAc...) asparagine glycosylation sites follow: asparagine 277, asparagine 290, and asparagine 294. Histidine 429 contacts substrate. Aspartate 449 contacts Mn(2+). Residues aspartate 449, aspartate 460, and histidine 523 each contribute to the Zn(2+) site. Histidine 523, histidine 532, and glutamate 554 together coordinate substrate. Positions 554 and 568 each coordinate Zn(2+). Alanine 649 carries the GPI-anchor amidated alanine lipid modification. The propeptide at 650–673 is removed in mature form; it reads RAAPTTSLGSLMTVSALAILGWSV.

This sequence belongs to the peptidase M24B family. Homotrimer. It depends on Zn(2+) as a cofactor. N-glycosylated. Kidney.

It is found in the cell membrane. The catalysed reaction is Release of any N-terminal amino acid, including proline, that is linked to proline, even from a dipeptide or tripeptide.. With respect to regulation, inhibited by apstatin and the metal ion chelator EDTA. Potently inhibited by the converting enzyme inhibitors cilazaprilat; enalaprilat; L155,212; ramiprilat and YS 980. Also inhibited to a lesser extent by indolaprilat; quinaprilat; spiraprilat; captopril and zofenoprilat. Functionally, membrane-bound metalloprotease which catalyzes the removal of a penultimate prolyl residue from the N-termini of peptides, such as Arg-Pro-Pro. May play a role in the metabolism of the vasodilator bradykinin. The protein is Xaa-Pro aminopeptidase 2 (XPNPEP2) of Sus scrofa (Pig).